We begin with the raw amino-acid sequence, 232 residues long: Large ribosomal subunit protein uL1 (232 aa).

This sequence belongs to the universal ribosomal protein uL1 family. In terms of assembly, part of the 50S ribosomal subunit.

Binds directly to 23S rRNA. The L1 stalk is quite mobile in the ribosome, and is involved in E site tRNA release. Its function is as follows. Protein L1 is also a translational repressor protein, it controls the translation of the L11 operon by binding to its mRNA. The chain is Large ribosomal subunit protein uL1 from Cutibacterium acnes (strain DSM 16379 / KPA171202) (Propionibacterium acnes).